A 470-amino-acid chain; its full sequence is MNPNQKIITIGSASLGLVFLNVILHVVSITVTVLVLSNNVTGPNCNGTIIREYNGTVRIERITQWYNTNIIEYIERPSNEYYMSNTEPLCEAQGFAPFSKDNGIRIGSKGHVFVIREPFVSCSPLECRTFFLTQGSLLNDKHSNGTVKDRSPYRTLMSVEVGQSPNVYQARFEAVAWSATACHDGKKWMTVGVTGPDAQAVAVVHYGGVPVDVINSWAGNILRTQESSCTCIKGDCYWVMTDGPANRQAQYKIFKAKDGRIIGQTDVNFNGGHIEECSCYPNEGKVECVCRDNWTGTNRPVLVISPDLSYTVGYLCAGIPTDTPRGEDSQFTGSCTKPLGNQGYGIKGFGFRQGNDVWAGRTISRTSRSGFEIIKIRNGWTQNSKDQIRKQVIVDNLNWSGYSGSFTLPVELTKKGCLVPCFWVEMIRGKPEEITIWTSSSSIVMCGVDHKVASWSWHDGAILPFDIDKM.

Residues 1-14 (MNPNQKIITIGSAS) are Intravirion-facing. Residues 11–32 (GSASLGLVFLNVILHVVSITVT) form an involved in apical transport and lipid raft association region. The chain crosses the membrane as a helical span at residues 15–35 (LGLVFLNVILHVVSITVTVLV). The interval 32-86 (TVLVLSNNVTGPNCNGTIIREYNGTVRIERITQWYNTNIIEYIERPSNEYYMSNT) is hypervariable stalk region. At 36 to 470 (LSNNVTGPNC…AILPFDIDKM (435 aa)) the chain is on the virion surface side. N-linked (GlcNAc...) asparagine; by host glycans are attached at residues Asn-39, Asn-46, and Asn-54. The tract at residues 89-470 (LCEAQGFAPF…AILPFDIDKM (382 aa)) is head of neuraminidase. Cystine bridges form between Cys-90–Cys-417, Cys-122–Cys-127, Cys-182–Cys-229, Cys-231–Cys-236, Cys-277–Cys-290, Cys-279–Cys-288, Cys-316–Cys-335, and Cys-421–Cys-446. Arg-116 provides a ligand contact to substrate. A glycan (N-linked (GlcNAc...) asparagine; by host) is linked at Asn-144. The active-site Proton donor/acceptor is Asp-149. Residue Arg-150 participates in substrate binding. 275–276 (EE) lines the substrate pocket. A substrate-binding site is contributed by Arg-291. Residue Asp-292 participates in Ca(2+) binding. N-linked (GlcNAc...) asparagine; by host glycosylation is present at Asn-293. 2 residues coordinate Ca(2+): Gly-296 and Asp-322. Arg-368 contacts substrate. The N-linked (GlcNAc...) asparagine; by host glycan is linked to Asn-398. The active-site Nucleophile is the Tyr-402.

It belongs to the glycosyl hydrolase 34 family. As to quaternary structure, homotetramer. Requires Ca(2+) as cofactor. N-glycosylated.

It is found in the virion membrane. It localises to the host apical cell membrane. The catalysed reaction is Hydrolysis of alpha-(2-&gt;3)-, alpha-(2-&gt;6)-, alpha-(2-&gt;8)- glycosidic linkages of terminal sialic acid residues in oligosaccharides, glycoproteins, glycolipids, colominic acid and synthetic substrates.. Its activity is regulated as follows. Inhibited by the neuraminidase inhibitors zanamivir (Relenza) and oseltamivir (Tamiflu). These drugs interfere with the release of progeny virus from infected cells and are effective against all influenza strains. Resistance to neuraminidase inhibitors is quite rare. Functionally, catalyzes the removal of terminal sialic acid residues from viral and cellular glycoconjugates. Cleaves off the terminal sialic acids on the glycosylated HA during virus budding to facilitate virus release. Additionally helps virus spread through the circulation by further removing sialic acids from the cell surface. These cleavages prevent self-aggregation and ensure the efficient spread of the progeny virus from cell to cell. Otherwise, infection would be limited to one round of replication. Described as a receptor-destroying enzyme because it cleaves a terminal sialic acid from the cellular receptors. May facilitate viral invasion of the upper airways by cleaving the sialic acid moieties on the mucin of the airway epithelial cells. Likely to plays a role in the budding process through its association with lipid rafts during intracellular transport. May additionally display a raft-association independent effect on budding. Plays a role in the determination of host range restriction on replication and virulence. Sialidase activity in late endosome/lysosome traffic seems to enhance virus replication. The chain is Neuraminidase from Aves (Horse).